The sequence spans 213 residues: Protein-L-isoaspartate O-methyltransferase (213 aa).

The active site involves Ser-62.

The protein belongs to the methyltransferase superfamily. L-isoaspartyl/D-aspartyl protein methyltransferase family.

The protein resides in the cytoplasm. It catalyses the reaction [protein]-L-isoaspartate + S-adenosyl-L-methionine = [protein]-L-isoaspartate alpha-methyl ester + S-adenosyl-L-homocysteine. Its function is as follows. Catalyzes the methyl esterification of L-isoaspartyl residues in peptides and proteins that result from spontaneous decomposition of normal L-aspartyl and L-asparaginyl residues. It plays a role in the repair and/or degradation of damaged proteins. This is Protein-L-isoaspartate O-methyltransferase from Desulfovibrio desulfuricans (strain ATCC 27774 / DSM 6949 / MB).